A 522-amino-acid polypeptide reads, in one-letter code: Amphoterin-induced protein 2 (522 aa).

The first 39 residues, 1–39, serve as a signal peptide directing secretion; it reads MSLRVHTLPTLLGAVVRPGCRELLCLLMITVAVGPGASG. An LRRNT domain is found at 40 to 68; sequence VCPTACICATDIVSCTNKHLSKVPGNLFR. At 40–398 the chain is on the extracellular side; that stretch reads VCPTACICAT…RSHAHEAFNT (359 aa). 2 disulfides stabilise this stretch: cysteine 41–cysteine 47 and cysteine 45–cysteine 54. LRR repeat units lie at residues 69–90, 94–115, 118–139, 142–163, 166–187, and 193–214; these read LMKR…WIPV, KLNT…SFST, NLKC…VFQE, VLEV…AFGG, QLQK…LYVG, and ELMF…HINL. Asparagine 104 carries N-linked (GlcNAc...) asparagine glycosylation. The 57-residue stretch at 228–284 folds into the LRRCT domain; sequence NPFVCDCSLYSLLVFWYRRHFSSVMDFKNDYTCRLWSDSRHSRQVLLLQDSFMNCSD. Disulfide bonds link cysteine 232-cysteine 260 and cysteine 234-cysteine 282. Residues asparagine 281, asparagine 288, asparagine 345, asparagine 373, asparagine 381, and asparagine 384 are each glycosylated (N-linked (GlcNAc...) asparagine). The Ig-like C2-type domain occupies 289–379; that stretch reads GSFRALGFIH…RLLNETVDVT (91 aa). A disulfide bridge links cysteine 310 with cysteine 363. Residues 399-419 traverse the membrane as a helical segment; the sequence is AFTTLAACVASIVLVLLYLYL. The Cytoplasmic segment spans residues 420-522; the sequence is TPCPCKCKTK…FSDTPFVAST (103 aa). The disordered stretch occupies residues 501-522; sequence RGKSDSDSVNSVFSDTPFVAST.

Belongs to the immunoglobulin superfamily. AMIGO family. As to quaternary structure, binds itself as well as AMIGO1 and AMIGO3.

Its subcellular location is the cell membrane. It is found in the nucleus. Required for depolarization-dependent survival of cultured cerebellar granule neurons. May mediate homophilic as well as heterophilic cell-cell interaction with AMIGO1 or AMIGO3. May contribute to signal transduction through its intracellular domain. This is Amphoterin-induced protein 2 from Pongo abelii (Sumatran orangutan).